Here is a 165-residue protein sequence, read N- to C-terminus: Ribosome maturation factor RimM (165 aa).

In terms of domain architecture, PRC barrel spans 89-161 (EADTHYVVDL…KIVIKPVRQW (73 aa)).

This sequence belongs to the RimM family. As to quaternary structure, binds ribosomal protein uS19.

It is found in the cytoplasm. Functionally, an accessory protein needed during the final step in the assembly of 30S ribosomal subunit, possibly for assembly of the head region. Essential for efficient processing of 16S rRNA. May be needed both before and after RbfA during the maturation of 16S rRNA. It has affinity for free ribosomal 30S subunits but not for 70S ribosomes. The chain is Ribosome maturation factor RimM from Clostridium botulinum (strain Eklund 17B / Type B).